Reading from the N-terminus, the 255-residue chain is Type III pantothenate kinase (255 aa).

12 to 19 lines the ATP pocket; that stretch reads DIGNSYTK. Position 109 to 112 (109 to 112) interacts with substrate; the sequence is GDDL. Residue D111 is the Proton acceptor of the active site. T133 is a binding site for ATP. T185 is a binding site for substrate.

This sequence belongs to the type III pantothenate kinase family. Homodimer. It depends on NH4(+) as a cofactor. The cofactor is K(+).

The protein resides in the cytoplasm. It carries out the reaction (R)-pantothenate + ATP = (R)-4'-phosphopantothenate + ADP + H(+). It participates in cofactor biosynthesis; coenzyme A biosynthesis; CoA from (R)-pantothenate: step 1/5. Catalyzes the phosphorylation of pantothenate (Pan), the first step in CoA biosynthesis. The sequence is that of Type III pantothenate kinase from Malacoplasma penetrans (strain HF-2) (Mycoplasma penetrans).